We begin with the raw amino-acid sequence, 588 residues long: Proline--tRNA ligase (588 aa).

Belongs to the class-II aminoacyl-tRNA synthetase family. ProS type 1 subfamily. In terms of assembly, homodimer.

Its subcellular location is the cytoplasm. It catalyses the reaction tRNA(Pro) + L-proline + ATP = L-prolyl-tRNA(Pro) + AMP + diphosphate. In terms of biological role, catalyzes the attachment of proline to tRNA(Pro) in a two-step reaction: proline is first activated by ATP to form Pro-AMP and then transferred to the acceptor end of tRNA(Pro). As ProRS can inadvertently accommodate and process non-cognate amino acids such as alanine and cysteine, to avoid such errors it has two additional distinct editing activities against alanine. One activity is designated as 'pretransfer' editing and involves the tRNA(Pro)-independent hydrolysis of activated Ala-AMP. The other activity is designated 'posttransfer' editing and involves deacylation of mischarged Ala-tRNA(Pro). The misacylated Cys-tRNA(Pro) is not edited by ProRS. The chain is Proline--tRNA ligase from Corynebacterium glutamicum (strain ATCC 13032 / DSM 20300 / JCM 1318 / BCRC 11384 / CCUG 27702 / LMG 3730 / NBRC 12168 / NCIMB 10025 / NRRL B-2784 / 534).